The following is a 379-amino-acid chain: Succinyl-diaminopimelate desuccinylase (379 aa).

His-70 is a binding site for Zn(2+). Residue Asp-72 is part of the active site. Asp-103 contributes to the Zn(2+) binding site. The active-site Proton acceptor is Glu-137. Residues Glu-138, Glu-166, and His-352 each contribute to the Zn(2+) site.

Belongs to the peptidase M20A family. DapE subfamily. In terms of assembly, homodimer. The cofactor is Zn(2+). Requires Co(2+) as cofactor.

It catalyses the reaction N-succinyl-(2S,6S)-2,6-diaminopimelate + H2O = (2S,6S)-2,6-diaminopimelate + succinate. The protein operates within amino-acid biosynthesis; L-lysine biosynthesis via DAP pathway; LL-2,6-diaminopimelate from (S)-tetrahydrodipicolinate (succinylase route): step 3/3. In terms of biological role, catalyzes the hydrolysis of N-succinyl-L,L-diaminopimelic acid (SDAP), forming succinate and LL-2,6-diaminopimelate (DAP), an intermediate involved in the bacterial biosynthesis of lysine and meso-diaminopimelic acid, an essential component of bacterial cell walls. This Paraburkholderia xenovorans (strain LB400) protein is Succinyl-diaminopimelate desuccinylase.